Consider the following 104-residue polypeptide: Large ribosomal subunit protein uL24 (104 aa).

The protein belongs to the universal ribosomal protein uL24 family. Part of the 50S ribosomal subunit.

One of two assembly initiator proteins, it binds directly to the 5'-end of the 23S rRNA, where it nucleates assembly of the 50S subunit. Functionally, one of the proteins that surrounds the polypeptide exit tunnel on the outside of the subunit. The protein is Large ribosomal subunit protein uL24 of Ectopseudomonas mendocina (strain ymp) (Pseudomonas mendocina).